Here is a 215-residue protein sequence, read N- to C-terminus: Interleukin-12 subunit alpha (215 aa).

A signal peptide spans 1–22; it reads MCSSRCLLFLATLAFLIHLSLA. Disulfide bonds link cysteine 33–cysteine 106, cysteine 60–cysteine 192, and cysteine 81–cysteine 119. Residue asparagine 89 is glycosylated (N-linked (GlcNAc...) asparagine).

This sequence belongs to the IL-6 superfamily. As to quaternary structure, heterodimer with IL12B; disulfide-linked. This heterodimer is known as interleukin IL-12. Heterodimer with EBI3/IL27B; not disulfide-linked. This heterodimer is known as interleukin IL-35. Interacts with NBR1; this interaction promotes IL-12 secretion.

It is found in the secreted. Its function is as follows. Heterodimerizes with IL12B to form the IL-12 cytokine or with EBI3/IL27B to form the IL-35 cytokine. IL-12 is primarily produced by professional antigen-presenting cells (APCs) such as B-cells and dendritic cells (DCs) as well as macrophages and granulocytes and regulates T-cell and natural killer-cell responses, induces the production of interferon-gamma (IFN-gamma), favors the differentiation of T-helper 1 (Th1) cells and is an important link between innate resistance and adaptive immunity. Mechanistically, exerts its biological effects through a receptor composed of IL12R1 and IL12R2 subunits. Binding to the receptor results in the rapid tyrosine phosphorylation of a number of cellular substrates including the JAK family kinases TYK2 and JAK2. In turn, recruited STAT4 gets phosphorylated and translocates to the nucleus where it regulates cytokine/growth factor responsive genes. As part of IL-35, plays essential roles in maintaining the immune homeostasis of the liver microenvironment and also functions as an immune-suppressive cytokine. Mediates biological events through unconventional receptors composed of IL12RB2 and gp130/IL6ST heterodimers or homodimers. Signaling requires the transcription factors STAT1 and STAT4, which form a unique heterodimer that binds to distinct DNA sites. The chain is Interleukin-12 subunit alpha (IL12A) from Sigmodon hispidus (Hispid cotton rat).